A 247-amino-acid polypeptide reads, in one-letter code: DNA polymerase sliding clamp (247 aa).

This sequence belongs to the PCNA family. In terms of assembly, homotrimer. The subunits circularize to form a toroid; DNA passes through its center. Replication factor C (RFC) is required to load the toroid on the DNA.

Sliding clamp subunit that acts as a moving platform for DNA processing. Responsible for tethering the catalytic subunit of DNA polymerase and other proteins to DNA during high-speed replication. In Methanoculleus marisnigri (strain ATCC 35101 / DSM 1498 / JR1), this protein is DNA polymerase sliding clamp.